The chain runs to 184 residues: MLIVGLGNPGANYERTRHNIGFMVIDELVKKQNAQKISSSFDGTLFKFSNHFLLKPLTFMNLSGSAIRDVKQFYKIDEVVVIHDDLDLPFGTLRFKKGGGHGGHNGLRSTDEHISKEYIRVRMGIGKPEHKGEVASYVLSNFTKDEQAHLDEFITFTCKAIEALLTNTLEDVSSKYTIKNFPLK.

Y13 serves as a coordination point for tRNA. H18 functions as the Proton acceptor in the catalytic mechanism. The tRNA site is built by F59, N61, and N105.

It belongs to the PTH family. As to quaternary structure, monomer.

It localises to the cytoplasm. The enzyme catalyses an N-acyl-L-alpha-aminoacyl-tRNA + H2O = an N-acyl-L-amino acid + a tRNA + H(+). In terms of biological role, hydrolyzes ribosome-free peptidyl-tRNAs (with 1 or more amino acids incorporated), which drop off the ribosome during protein synthesis, or as a result of ribosome stalling. Functionally, catalyzes the release of premature peptidyl moieties from peptidyl-tRNA molecules trapped in stalled 50S ribosomal subunits, and thus maintains levels of free tRNAs and 50S ribosomes. This chain is Peptidyl-tRNA hydrolase, found in Sulfurimonas denitrificans (strain ATCC 33889 / DSM 1251) (Thiomicrospira denitrificans (strain ATCC 33889 / DSM 1251)).